Here is a 185-residue protein sequence, read N- to C-terminus: Elongation factor P (185 aa).

The protein belongs to the elongation factor P family.

It is found in the cytoplasm. It functions in the pathway protein biosynthesis; polypeptide chain elongation. Functionally, involved in peptide bond synthesis. Stimulates efficient translation and peptide-bond synthesis on native or reconstituted 70S ribosomes in vitro. Probably functions indirectly by altering the affinity of the ribosome for aminoacyl-tRNA, thus increasing their reactivity as acceptors for peptidyl transferase. This Nitrosomonas eutropha (strain DSM 101675 / C91 / Nm57) protein is Elongation factor P.